The following is a 158-amino-acid chain: Oocyte-secreted protein 2 (158 aa).

An N-terminal signal peptide occupies residues 1 to 17; the sequence is MALEVLMLLAVLIWTGA.

This sequence belongs to the PLAC1 family. As to expression, highly expressed in oocytes.

Its subcellular location is the secreted. The protein localises to the cytoplasm. Involved in oocyte maturation. The chain is Oocyte-secreted protein 2 (OOSP2) from Homo sapiens (Human).